We begin with the raw amino-acid sequence, 96 residues long: Large ribosomal subunit protein bL28 (96 aa).

The protein belongs to the bacterial ribosomal protein bL28 family.

In Agrobacterium fabrum (strain C58 / ATCC 33970) (Agrobacterium tumefaciens (strain C58)), this protein is Large ribosomal subunit protein bL28.